Reading from the N-terminus, the 432-residue chain is Glutamate-gated chloride channel subunit beta (432 aa).

A signal peptide spans 1–18 (MSQYMMVAVAAVVAVAGS). The Extracellular portion of the chain corresponds to 19 to 249 (SQISRRSTGG…MQLTLKRQFS (231 aa)). Asparagine 52 is a glycosylation site (N-linked (GlcNAc...) asparagine). The L-glutamate site is built by arginine 69, arginine 88, and serine 155. A disulfide bridge links cysteine 164 with cysteine 178. Serine 184 is a binding site for L-glutamate. The N-linked (GlcNAc...) asparagine glycan is linked to asparagine 219. A disulfide bridge links cysteine 226 with cysteine 237. Residues 250–272 (YYLVQLYGPTTMIVIVSWVSFWI) form a helical membrane-spanning segment. Over 273–277 (DMHST) the chain is Cytoplasmic. Residues 278–299 (AGRVALGVTTLLTMTTMQAAIN) traverse the membrane as a helical segment. The Extracellular portion of the chain corresponds to 300-306 (AKLPPVS). The helical transmembrane segment at 307–327 (YVKVVDVWLGACQTFVFGALL) threads the bilayer. Residues 328-402 (EYAFVSYQDS…KPDYLPAKID (75 aa)) lie on the Cytoplasmic side of the membrane. Residues 403-426 (YYARFCVPLGFLAFNAIYWTSCLV) form a helical membrane-spanning segment. The Extracellular portion of the chain corresponds to 427-432 (MVSRLV).

The protein belongs to the ligand-gated ion channel (TC 1.A.9) family. Glutamate-gated chloride channel (TC 1.A.9.4) subfamily. As to quaternary structure, pentamer. In terms of tissue distribution, expressed in motor neuron commissures at the anterior portion of the worms.

It is found in the postsynaptic cell membrane. It localises to the cell membrane. Functionally, glutamate-gated chloride channel subunit; channel properties may be modulated by the formation of heteromeric channels. Glutamate binding triggers a rapidly reversible current, while the anti-helmintic drug ivermectin triggers a permanently open channel configuration. The chain is Glutamate-gated chloride channel subunit beta from Haemonchus contortus (Barber pole worm).